A 123-amino-acid chain; its full sequence is Small ribosomal subunit protein uS13 (123 aa).

The segment at threonine 103–lysine 123 is disordered. Residues threonine 105–lysine 123 are compositionally biased toward basic residues.

It belongs to the universal ribosomal protein uS13 family. Part of the 30S ribosomal subunit. Forms a loose heterodimer with protein S19. Forms two bridges to the 50S subunit in the 70S ribosome.

Functionally, located at the top of the head of the 30S subunit, it contacts several helices of the 16S rRNA. In the 70S ribosome it contacts the 23S rRNA (bridge B1a) and protein L5 of the 50S subunit (bridge B1b), connecting the 2 subunits; these bridges are implicated in subunit movement. Contacts the tRNAs in the A and P-sites. The sequence is that of Small ribosomal subunit protein uS13 from Desulforudis audaxviator (strain MP104C).